Consider the following 270-residue polypeptide: Myeloid leukemia factor 1 (270 aa).

A phosphoserine mark is found at serine 6, serine 8, serine 32, and serine 34. The segment at 50-125 (RARNRMGHED…VGDEPPKVFQ (76 aa)) is interaction with COPS3. Disordered stretches follow at residues 127–148 (STQT…RDSD) and 221–247 (RSVA…AIEH). A compositionally biased stretch (basic and acidic residues) spans 138–148 (KETRKALRDSD).

The protein belongs to the MLF family. As to quaternary structure, interacts with CENPU. Also interacts with NRBP1/MADM, YWHAZ/14-3-3-zeta and HNRPUL2/MANP. NRBP1 recruits a serine kinase which phosphorylates both itself and MLF1. Phosphorylated MLF1 then binds to YWHAZ and is retained in the cytoplasm. Retained in the nucleus by binding to HNRPUL2. Binds to COPS3/CSN3 which is required for suppression of COP1 and activation of p53. Phosphorylation is required for binding to YWHAZ.

The protein localises to the cytoplasm. Its subcellular location is the nucleus. It is found in the cell projection. It localises to the cilium. The protein resides in the cytoskeleton. The protein localises to the cilium basal body. Its function is as follows. Involved in lineage commitment of primary hemopoietic progenitors by restricting erythroid formation and enhancing myeloid formation. Interferes with erythropoietin-induced erythroid terminal differentiation by preventing cells from exiting the cell cycle through suppression of CDKN1B/p27Kip1 levels. Suppresses COP1 activity via CSN3 which activates p53 and induces cell cycle arrest. Binds DNA and affects the expression of a number of genes so may function as a transcription factor in the nucleus. This chain is Myeloid leukemia factor 1 (MLF1), found in Bos taurus (Bovine).